The sequence spans 585 residues: Arginine--tRNA ligase (585 aa).

A 'HIGH' region motif is present at residues 131–141 (ANPTGPMHVGH).

The protein belongs to the class-I aminoacyl-tRNA synthetase family. As to quaternary structure, monomer.

It localises to the cytoplasm. The catalysed reaction is tRNA(Arg) + L-arginine + ATP = L-arginyl-tRNA(Arg) + AMP + diphosphate. The sequence is that of Arginine--tRNA ligase from Sinorhizobium medicae (strain WSM419) (Ensifer medicae).